The following is a 1414-amino-acid chain: MVAAATLVLTFAQSPGQISPDTKLDLTANPLRFLARAFNLWNSDLPFGQAQNQAYGYLFPHGTFFLLGDVLGVPGWVTQRLWWALLLTVGFWGVLRVAEALGIGSTPSRLIGAAAFALSPRVLTTLGAISSETLPMMLAPWVLLPVILALRGQHSVRLMAARSAGAVALMGAVNAVATLTGCLAAVIWWACHRPNRLWWRFTAWWLLCGALAVTWWVVALLMLGRISPPFLDFIESSGVTTQWMSLTEMLRGTMSWTPFVAPSATAGASLVTSTTAVLATTVVAAAGLAGLALRTMPARGRLITMLLIGVVLLGLGYSGGLGSPVALQVQAFLDGSGTPLRNLAKLEPVIRLPLALGLVHLLGRIPLPGSAPRAVWVSAFAHPERDKRVAVAIVVLSALAAGTSLAWTARLTPPGSFTAIPQHWHDAAAWLDEHNTDRGRVLVAPGAPFATQVWGNSHDEPLQVLGDNPWGVRDSIPLTPPETIRALDSVQRLFASGRPSPGLADTLARQGISYVVVRNDLDPDTSRSARPILVHRAVEGSPGLTKVAEFGDPVGPGTLEGFVADSGLRPRYPAVEIFRVEPADAGSSQQRSPMHPYLVDSDAMTRVAGAPEALLRLDERRRLNGEPPLGPMLLAADARRAGLPVDGVIVTDTPTAREIDYGRVDDHASAIRTPDDARHTYNRVPDYPSDGADLVYGKWTGGRLSVSSSAADSTALPYVAPATGPAAAIDSDSSTAWVSNALQAAVGQWLQVDFDHPVTNATLTITPSATAVGAQVRRIEIATATGTSSLRFDTAGKPLTIPLPVGETPWVRVTAVATDDGSPGVQFGVTDLAITQYDASGFAHPVTLRHTVEVPGPPAGSVVQQWDLGTELLGRPGCADSPVGVRCAAAMALASEEPVNLSRTLTVPQDTEVQPTVWIRGRQGPNLADLVAQPDTTRAFGDSDPIDVLGSAYAATDGDPRTSWTAPQRVVQFQTPPTLTLKLPRPTEVSGMRIVPGDTEPPAHPTLVAIDLGDGPQMHRLPADGEPRTVTLKPRVTDTVTVSLLAWNDIIDRTSLGFDQLKPPGLAELTVLDGRGAPVGAADAAKNRSRAVALPCGQGPIIAVAGQFIQTSVHTTVGALLDGEPIPARPCRSEPVKLPAGQQELVVSPGAAFIVDGVELPTPAADEIRSAPTTSAETGTWTADRREVRVSAAAQQRVLVVPESVNRGWSAHDPAGAELQSVTVNGWQQGWVVPAGTEGTVTLTFASNMPYRVGLIGGLALLPLLALLALIPVRRPVRAAAPARPWNPGPVLTGAAALVAGTAISGVAGLLVVGAAMGVRILLNRRGAAGEKVWDNVTVVVAAGGLILAGSVLSQYPWRSVDGYVGHTPGVQFLALLSVAFLAASAVRLVNRPEPSEDGRSAKPEHTGASAHAG.

A run of 9 helical transmembrane segments spans residues 57–77, 81–101, 128–148, 167–187, 203–223, 273–293, 302–322, 352–372, and 389–409; these read YLFP…PGWV, LWWA…AEAL, AISS…PVIL, VALM…AAVI, AWWL…LLML, STTA…GLAL, LITM…GGLG, LPLA…GSAP, and VAVA…AWTA. An F5/8 type C domain is found at 687 to 845; the sequence is YPSDGADLVY…QYDASGFAHP (159 aa). 4 consecutive transmembrane segments (helical) span residues 1253–1273, 1297–1317, 1333–1353, and 1364–1384; these read VGLI…LIPV, ALVA…GAAM, VWDN…GSVL, and YVGH…FLAA. The disordered stretch occupies residues 1393–1414; that stretch reads PEPSEDGRSAKPEHTGASAHAG. Positions 1394 to 1406 are enriched in basic and acidic residues; the sequence is EPSEDGRSAKPEH.

It localises to the membrane. The catalysed reaction is Adds an alpha-D-arabinofuranosyl group from trans,octacis-decaprenylphospho-beta-D-arabinofuranose at the 3-O-position of an alpha-(1-&gt;5)-arabinofuranan chain attached to a beta-(1-&gt;5)-galactofuranan chain.. Its pathway is cell wall biogenesis; cell wall polysaccharide biosynthesis. Its function is as follows. Involved in the biosynthesis of the arabinogalactan (AG) region of the mycolylarabinogalactan-peptidoglycan (mAGP) complex, an essential component of the mycobacterial cell wall. Catalyzes the addition of an arabinofuranosyl (Araf) residue from the sugar donor decaprenyl-phospho-arabinose (DPA) on the C-3 of an alpha-(1-&gt;5)-linked Araf from the arabinan backbone of AG. This Mycolicibacterium smegmatis (strain ATCC 700084 / mc(2)155) (Mycobacterium smegmatis) protein is Alpha-(1-&gt;3)-arabinofuranosyltransferase (aftD).